A 111-amino-acid chain; its full sequence is Large ribosomal subunit protein uL22 (111 aa).

This sequence belongs to the universal ribosomal protein uL22 family. In terms of assembly, part of the 50S ribosomal subunit.

This protein binds specifically to 23S rRNA; its binding is stimulated by other ribosomal proteins, e.g. L4, L17, and L20. It is important during the early stages of 50S assembly. It makes multiple contacts with different domains of the 23S rRNA in the assembled 50S subunit and ribosome. Its function is as follows. The globular domain of the protein is located near the polypeptide exit tunnel on the outside of the subunit, while an extended beta-hairpin is found that lines the wall of the exit tunnel in the center of the 70S ribosome. The sequence is that of Large ribosomal subunit protein uL22 from Xanthomonas oryzae pv. oryzae (strain PXO99A).